The sequence spans 130 residues: Secreted RxLR effector protein 68 (130 aa).

An N-terminal signal peptide occupies residues 1 to 29 (MRCVCASIRRTRIIEFLMFFALSSSTASC). Asn-36 carries N-linked (GlcNAc...) asparagine glycosylation. The short motif at 45–48 (RWLR) is the RxLR element.

The protein belongs to the RxLR effector family.

It is found in the secreted. The protein resides in the host cytoplasm. It localises to the host nucleus. Functionally, effector that acts as a broad suppressor of cell death to interrupt plant immunity. Inhibits cell death induced by cell death-inducing proteins, including the PAMP elicitor INF1 from P.infestans. In Plasmopara viticola (Downy mildew of grapevine), this protein is Secreted RxLR effector protein 68.